A 430-amino-acid chain; its full sequence is MTITISRIHALEILDSRGNPTLQVGVTLSDGSFAQAGVPSGASTGSREALELRDGDAQRYLGKGVQKALANVKNHFAPALIGKPIYDLAALDRIMLAQDGTDFKTHLGANAILGVSLALARAKGASLKKPLYAVLCPQEEYTLPVPMMNIINGGEHADNSVDIQEFMIVPAGFDRFSEALRAGSEIFHTLKKVLKEQGLNTAVGDEGGFAPDLPSNEAAFAVIMQAIERAGYRAGEQIFLAMDAAASEFYREGRYHLASEQKAYTSAEFVDYLADLCRRYPIVSIEDGLHESDWDGWQLLTQSLGERVQLVGDDLFVTNSAILQEGIDKGVANAILIKPNQIGSLSETLQTIALADAAHYAAIISHRSGETEDTTIADIAVATTATQIKTGSLCRSDRVAKYNRLLTIEDELGTRARYAAKAAFLGKIKA.

Gln164 provides a ligand contact to (2R)-2-phosphoglycerate. Catalysis depends on Glu206, which acts as the Proton donor. The Mg(2+) site is built by Asp243, Glu286, and Asp313. (2R)-2-phosphoglycerate is bound by residues Lys338, Arg367, Ser368, and Lys389. The active-site Proton acceptor is the Lys338.

This sequence belongs to the enolase family. In terms of assembly, component of the RNA degradosome, a multiprotein complex involved in RNA processing and mRNA degradation. It depends on Mg(2+) as a cofactor.

It is found in the cytoplasm. The protein localises to the secreted. The protein resides in the cell surface. It catalyses the reaction (2R)-2-phosphoglycerate = phosphoenolpyruvate + H2O. Its pathway is carbohydrate degradation; glycolysis; pyruvate from D-glyceraldehyde 3-phosphate: step 4/5. Catalyzes the reversible conversion of 2-phosphoglycerate (2-PG) into phosphoenolpyruvate (PEP). It is essential for the degradation of carbohydrates via glycolysis. The chain is Enolase from Dichelobacter nodosus (strain VCS1703A).